The primary structure comprises 321 residues: Anthranilate phosphoribosyltransferase (321 aa).

5-phospho-alpha-D-ribose 1-diphosphate is bound by residues Gly72, 75-76 (GD), Thr80, 82-85 (NVST), 99-107 (KHGNVSVTS), and Ser111. Gly72 serves as a coordination point for anthranilate. Ser84 lines the Mg(2+) pocket. Asn102 provides a ligand contact to anthranilate. Residue Arg157 participates in anthranilate binding. The Mg(2+) site is built by Asp216 and Glu217.

The protein belongs to the anthranilate phosphoribosyltransferase family. Homodimer. Requires Mg(2+) as cofactor.

It catalyses the reaction N-(5-phospho-beta-D-ribosyl)anthranilate + diphosphate = 5-phospho-alpha-D-ribose 1-diphosphate + anthranilate. Its pathway is amino-acid biosynthesis; L-tryptophan biosynthesis; L-tryptophan from chorismate: step 2/5. Its function is as follows. Catalyzes the transfer of the phosphoribosyl group of 5-phosphorylribose-1-pyrophosphate (PRPP) to anthranilate to yield N-(5'-phosphoribosyl)-anthranilate (PRA). This is Anthranilate phosphoribosyltransferase from Methanococcus vannielii (strain ATCC 35089 / DSM 1224 / JCM 13029 / OCM 148 / SB).